Reading from the N-terminus, the 357-residue chain is Geranylgeranyl pyrophosphate synthase spyE (357 aa).

The tract at residues 36–60 (EAQSQAVPGTRTETEPTGSSPSDLQ) is disordered. The segment covering 50–59 (EPTGSSPSDL) has biased composition (polar residues). Positions 84, 87, and 116 each coordinate isopentenyl diphosphate. Mg(2+) contacts are provided by D123 and D127. Residue R132 coordinates dimethylallyl diphosphate. Position 133 (R133) interacts with isopentenyl diphosphate. The dimethylallyl diphosphate site is built by K210, T211, and Q244. D247 provides a ligand contact to Mg(2+). Residues N251, K261, and K271 each coordinate dimethylallyl diphosphate.

The protein belongs to the FPP/GGPP synthase family. It depends on Mg(2+) as a cofactor.

The enzyme catalyses isopentenyl diphosphate + dimethylallyl diphosphate = (2E)-geranyl diphosphate + diphosphate. The catalysed reaction is isopentenyl diphosphate + (2E)-geranyl diphosphate = (2E,6E)-farnesyl diphosphate + diphosphate. It carries out the reaction isopentenyl diphosphate + (2E,6E)-farnesyl diphosphate = (2E,6E,10E)-geranylgeranyl diphosphate + diphosphate. The protein operates within secondary metabolite biosynthesis; terpenoid biosynthesis. Functionally, geranylgeranyl pyrophosphate synthase; part of the gene cluster that mediates the biosynthesis of meroterpenoids called sartorypyrones. Within the pathway, spyE provides the spyF cosubstrate geranylgeranyl pyrophosphate (GGPP) for the prenylation of triacetic acid lactone (TAL). The biosynthesis of sartorypyrones begins with the production of triacetic acid lactone (TAL) by the NR-PKS spyA using one molecule of acetyl-CoA and two molecules of malonyl-CoA. The prenyltransferase spyF then conjugates geranylgeranyl pyrophosphate (GGPP) to TAL to form geranylgeranyl-triacetate lactone, for which the pathway-specific geranylgeranyl pyrophosphate synthase (GGPS) spyE is required to provide GGPP. Subsequently, geranylgeranyl-triacetate lactone is epoxidized at the terminal olein by the FAD-dependent monooxygenase spyC, followed by cyclization of the terpenoid component catalyzed by the terpene cyclase spyD to produce both the bicyclic sartorypyrone F and the monocyclic sartorypyrone D. Finally, the last step of the biosynthesis involves the acetylation of the meroterpenoids sartorypyrones D and F by the acetyltransferase SpyB to produce sartorypyrones A and G, respectively. This is Geranylgeranyl pyrophosphate synthase spyE from Aspergillus fumigatus (strain ATCC MYA-4609 / CBS 101355 / FGSC A1100 / Af293) (Neosartorya fumigata).